Reading from the N-terminus, the 356-residue chain is Homoserine O-acetyltransferase (356 aa).

The AB hydrolase-1 domain occupies 49 to 337; that stretch reads VLICHALTGS…KSTHGHDAFL (289 aa). Serine 143 serves as the catalytic Nucleophile. Arginine 212 serves as a coordination point for substrate. Catalysis depends on residues aspartate 304 and histidine 333. Aspartate 334 provides a ligand contact to substrate.

This sequence belongs to the AB hydrolase superfamily. MetX family. Homodimer.

It localises to the cytoplasm. It catalyses the reaction L-homoserine + acetyl-CoA = O-acetyl-L-homoserine + CoA. It functions in the pathway amino-acid biosynthesis; L-methionine biosynthesis via de novo pathway; O-acetyl-L-homoserine from L-homoserine: step 1/1. Transfers an acetyl group from acetyl-CoA to L-homoserine, forming acetyl-L-homoserine. The chain is Homoserine O-acetyltransferase from Nostoc punctiforme (strain ATCC 29133 / PCC 73102).